Consider the following 382-residue polypeptide: Pectinesterase (382 aa).

The signal sequence occupies residues 1 to 16 (MKIIVLLLLAVVLASA). Cysteine 153 and cysteine 164 are oxidised to a cystine. N-linked (GlcNAc...) asparagine glycosylation occurs at asparagine 179. Glutamine 193 serves as a coordination point for substrate. The active-site Proton donor is aspartate 216. Residue aspartate 242 is the Nucleophile of the active site. Substrate is bound by residues arginine 306 and tryptophan 308. Residues asparagine 340 and asparagine 376 are each glycosylated (N-linked (GlcNAc...) asparagine).

This sequence belongs to the pectinesterase family. As to expression, expressed throughout the midgut with particularly strong expression in the ventriculus.

It localises to the secreted. The enzyme catalyses [(1-&gt;4)-alpha-D-galacturonosyl methyl ester](n) + n H2O = [(1-&gt;4)-alpha-D-galacturonosyl](n) + n methanol + n H(+). The protein operates within glycan metabolism; pectin degradation; 2-dehydro-3-deoxy-D-gluconate from pectin: step 1/5. Functionally, pectinesterase which probably plays an important role in the digestion of plant cell walls. This chain is Pectinesterase, found in Sitophilus oryzae (Rice weevil).